A 141-amino-acid polypeptide reads, in one-letter code: Large ribosomal subunit protein uL11 (141 aa).

Belongs to the universal ribosomal protein uL11 family. In terms of assembly, part of the ribosomal stalk of the 50S ribosomal subunit. Interacts with L10 and the large rRNA to form the base of the stalk. L10 forms an elongated spine to which L12 dimers bind in a sequential fashion forming a multimeric L10(L12)X complex. Post-translationally, one or more lysine residues are methylated.

In terms of biological role, forms part of the ribosomal stalk which helps the ribosome interact with GTP-bound translation factors. This Chlamydia trachomatis serovar A (strain ATCC VR-571B / DSM 19440 / HAR-13) protein is Large ribosomal subunit protein uL11.